Consider the following 175-residue polypeptide: NADH-ubiquinone oxidoreductase chain 6 (175 aa).

Transmembrane regions (helical) follow at residues 1 to 21 (MMYI…GFSS), 25 to 45 (PVYG…IIMG), 51 to 71 (LGLV…GYTI), 87 to 107 (VVLG…MWLF), 112 to 132 (ELVG…EGGF), and 148 to 168 (YGFW…FIAI).

Belongs to the complex I subunit 6 family. As to quaternary structure, core subunit of respiratory chain NADH dehydrogenase (Complex I) which is composed of 45 different subunits.

It is found in the mitochondrion inner membrane. The catalysed reaction is a ubiquinone + NADH + 5 H(+)(in) = a ubiquinol + NAD(+) + 4 H(+)(out). In terms of biological role, core subunit of the mitochondrial membrane respiratory chain NADH dehydrogenase (Complex I) which catalyzes electron transfer from NADH through the respiratory chain, using ubiquinone as an electron acceptor. Essential for the catalytic activity and assembly of complex I. This is NADH-ubiquinone oxidoreductase chain 6 (MT-ND6) from Loxodonta africana (African elephant).